The sequence spans 392 residues: Putative F-box protein At1g71320 (392 aa).

An F-box domain is found at 8–55; sequence NPKTIFIPDDIAEGIFHHLPIKSLARFKVLSKKWTSMIESTYFSHKRL.

The sequence is that of Putative F-box protein At1g71320 from Arabidopsis thaliana (Mouse-ear cress).